The sequence spans 282 residues: Bifunctional protein FolD (282 aa).

NADP(+) is bound by residues 165–167 (GAS) and Ile231.

It belongs to the tetrahydrofolate dehydrogenase/cyclohydrolase family. As to quaternary structure, homodimer.

It carries out the reaction (6R)-5,10-methylene-5,6,7,8-tetrahydrofolate + NADP(+) = (6R)-5,10-methenyltetrahydrofolate + NADPH. The enzyme catalyses (6R)-5,10-methenyltetrahydrofolate + H2O = (6R)-10-formyltetrahydrofolate + H(+). It functions in the pathway one-carbon metabolism; tetrahydrofolate interconversion. Functionally, catalyzes the oxidation of 5,10-methylenetetrahydrofolate to 5,10-methenyltetrahydrofolate and then the hydrolysis of 5,10-methenyltetrahydrofolate to 10-formyltetrahydrofolate. The chain is Bifunctional protein FolD from Francisella tularensis subsp. novicida (strain U112).